The following is a 513-amino-acid chain: Cobyric acid synthase (513 aa).

The GATase cobBQ-type domain occupies 270–470 (RLRIAIVAYP…THGLFESPAV (201 aa)). Cysteine 351 (nucleophile) is an active-site residue. Histidine 462 is an active-site residue.

Belongs to the CobB/CobQ family. CobQ subfamily.

The protein operates within cofactor biosynthesis; adenosylcobalamin biosynthesis. Its function is as follows. Catalyzes amidations at positions B, D, E, and G on adenosylcobyrinic A,C-diamide. NH(2) groups are provided by glutamine, and one molecule of ATP is hydrogenolyzed for each amidation. This chain is Cobyric acid synthase, found in Leptothrix cholodnii (strain ATCC 51168 / LMG 8142 / SP-6) (Leptothrix discophora (strain SP-6)).